The primary structure comprises 582 residues: PTS system lactose-specific EIICB component (582 aa).

In terms of domain architecture, PTS EIIC type-3 spans 8-409 (IEKGKPFFEK…VVDVIIYYPF (402 aa)). 9 consecutive transmembrane segments (helical) span residues 30-50 (GFIA…ITYV), 64-84 (GILM…VAGT), 103-123 (INFI…AADP), 137-157 (KGLL…NFFV), 176-196 (VFKD…LDLL), 222-242 (GWIG…VGIH), 283-303 (FVAT…FMWL), 339-359 (VFFI…KFFV), and 381-401 (IVMG…LIVV). The segment at 453–473 (ASEADTDDTSSVDETTSTSST) is disordered. A compositionally biased stretch (low complexity) spans 464-473 (VDETTSTSST). The region spanning 479 to 582 (QTNVLVLCAG…LEFVKQQFNN (104 aa)) is the PTS EIIB type-3 domain. The Phosphocysteine intermediate; for EIIB activity role is filled by C486. At C486 the chain carries Phosphocysteine; by EIIA.

It is found in the cell membrane. It catalyses the reaction lactose(out) + N(pros)-phospho-L-histidyl-[protein] = lactose 6-phosphate(in) + L-histidyl-[protein]. Its function is as follows. The phosphoenolpyruvate-dependent sugar phosphotransferase system (sugar PTS), a major carbohydrate active transport system, catalyzes the phosphorylation of incoming sugar substrates concomitantly with their translocation across the cell membrane. The enzyme II LacEF PTS system is involved in lactose transport. The polypeptide is PTS system lactose-specific EIICB component (Staphylococcus epidermidis (strain ATCC 35984 / DSM 28319 / BCRC 17069 / CCUG 31568 / BM 3577 / RP62A)).